The following is a 925-amino-acid chain: Coronin-7 (925 aa).

4 WD repeats span residues 75–115, 124–163, 166–205, and 209–253; these read CHSD…QALP, PEDLPVEVLQFHPTSDGILVSAAGTTVKVWDAAKQQPLTE, AHGDLVQSAVWSRDGALVGTACKDKQLRIFDPRTKPRASQ, and AHEN…SALA. The disordered stretch occupies residues 419 to 461; it reads VGDADASEGFSSPPSSLTSPSTPSSLGPSLSSTSGIGTSPSLR. A compositionally biased stretch (low complexity) spans 429–460; it reads SSPPSSLTSPSTPSSLGPSLSSTSGIGTSPSL. Serine 462 and serine 465 each carry phosphoserine. Lysine 472 participates in a covalent cross-link: Glycyl lysine isopeptide (Lys-Gly) (interchain with G-Cter in ubiquitin). 3 WD repeats span residues 542–582, 592–632, and 635–674; these read QNGA…LEEV, GHTE…DRLK, and GHQDQIFSLAWSPDGQQLATVCKDGRVRVYRPRSGPEPLQ. Lysine 680 is covalently cross-linked (Glycyl lysine isopeptide (Lys-Gly) (interchain with G-Cter in ubiquitin)). A WD 8 repeat occupies 728–768; sequence DVAPSTLLPSYDPDTGLVLLTGKGDTRVFLYELLPESPFFL. The tract at residues 858–925 is disordered; it reads QPPDMSPVSQ…FEGVDEDEWD (68 aa). A compositionally biased stretch (low complexity) spans 866-882; sequence SQAPREAPARRAPSSAQ. The span at 884 to 896 shows a compositional bias: basic and acidic residues; the sequence is LEEKSDQQKKEEL. Serine 915 is subject to Phosphoserine.

The protein belongs to the WD repeat coronin family. As to quaternary structure, interacts with clathrin adapter AP1 complex. This interaction takes place at Golgi membranes and not AP1-positive endosomal membranes. Interacts (when ubiquitinated at Lys-472) with EPS15. Post-translationally, the membrane-associated form is phosphorylated on tyrosine residues. Ubiquitinated via 'Lys-33'-linked ubiquitin chains by the BCR(KLHL20) E3 ubiquitin ligase complex: 'Lys-33'-linked ubiquitination promotes interaction with EPS15 and facilitates actin polymerization at the trans-Golgi network, thereby facilitating post-Golgi trafficking. Deubiquitinated by ZRANB1/TRABID. In terms of tissue distribution, widely expressed. Expressed in the spleen, peripheral leukocytes, testes, brain, thymus and small intestine.

It localises to the golgi apparatus membrane. The protein localises to the golgi apparatus. It is found in the trans-Golgi network. The protein resides in the cytoplasmic vesicle. Its subcellular location is the cytoplasm. It localises to the cytosol. Its function is as follows. F-actin regulator involved in anterograde Golgi to endosome transport: upon ubiquitination via 'Lys-33'-linked ubiquitin chains by the BCR(KLHL20) E3 ubiquitin ligase complex, interacts with EPS15 and localizes to the trans-Golgi network, where it promotes actin polymerization, thereby facilitating post-Golgi trafficking. May play a role in the maintenance of the Golgi apparatus morphology. This Homo sapiens (Human) protein is Coronin-7 (CORO7).